A 373-amino-acid chain; its full sequence is 3',5'-bisphosphate nucleotidase AHL (373 aa).

The active-site Proton acceptor is the Asp-52. Mg(2+) is bound by residues Glu-77, Asp-144, Val-146, and Asp-147. The Proton acceptor role is filled by Thr-149. Positions 149, 281, 284, 298, and 310 each coordinate adenosine 3',5'-bisphosphate. AMP is bound by residues Ser-281, Lys-284, Lys-298, and Asp-310. Residue Asp-310 coordinates Mg(2+).

This sequence belongs to the inositol monophosphatase superfamily. The cofactor is Mg(2+). In terms of tissue distribution, expressed in roots, leaves, stems, flowers and siliques.

It catalyses the reaction adenosine 3',5'-bisphosphate + H2O = AMP + phosphate. The catalysed reaction is 3'-phosphoadenylyl sulfate + H2O = adenosine 5'-phosphosulfate + phosphate. Inhibited by Li(+) (IC(50)=10 mM), Na(+) (IC(50)=50 mM) and Ca(2+) (IC(50)=0.06 mM). Functionally, phosphatase that converts adenosine 3'-phosphate 5'-phosphosulfate (PAPS) to adenosine 5'-phosphosulfate (APS) and 3'-phosphoadenosine 5'-phosphate (3'-PAP) to AMP. May regulate the flux of sulfur in the sulfur-activation pathway by converting PAPS to APS. Prevents both the toxicity of PAP on RNA processing enzymes as well as the product inhibition by PAP of sulfate conjugation. This Arabidopsis thaliana (Mouse-ear cress) protein is 3',5'-bisphosphate nucleotidase AHL.